We begin with the raw amino-acid sequence, 353 residues long: Probable cytochrome c oxidase subunit 2 (353 aa).

An N-terminal signal peptide occupies residues 1–42 (MTARELVCSQRVGQGLSRRLRPLVLAVTLGVLVVTLSGCSWS). A run of 2 helical transmembrane segments spans residues 63–83 (LWIGAVVASLVVGVIVWGLIF) and 110–130 (LVLTVTPFLIISMLFYFTVIV). Residues histidine 246, cysteine 287, cysteine 291, and histidine 295 each coordinate Cu cation.

The protein belongs to the cytochrome c oxidase subunit 2 family. Requires Cu cation as cofactor. Heme serves as cofactor.

It is found in the cell membrane. It carries out the reaction 4 Fe(II)-[cytochrome c] + O2 + 8 H(+)(in) = 4 Fe(III)-[cytochrome c] + 2 H2O + 4 H(+)(out). Functionally, subunits I and II form the functional core of the enzyme complex. Electrons originating in cytochrome c are transferred via heme a and Cu(A) to the binuclear center formed by heme a3 and Cu(B). The polypeptide is Probable cytochrome c oxidase subunit 2 (ctaC) (Mycobacterium leprae (strain TN)).